Reading from the N-terminus, the 310-residue chain is Malate dehydrogenase (310 aa).

NAD(+) is bound by residues 7-12 and D32; that span reads GAGNVG. R81 and R87 together coordinate substrate. NAD(+)-binding positions include N94 and 117 to 119; that span reads VSN. Substrate is bound by residues N119 and R150. Residue H174 is the Proton acceptor of the active site.

The protein belongs to the LDH/MDH superfamily. MDH type 3 family.

The enzyme catalyses (S)-malate + NAD(+) = oxaloacetate + NADH + H(+). Catalyzes the reversible oxidation of malate to oxaloacetate. This is Malate dehydrogenase from Chlorobium luteolum (strain DSM 273 / BCRC 81028 / 2530) (Pelodictyon luteolum).